The following is a 221-amino-acid chain: Type II secretion system protein J (221 aa).

The propeptide at 1 to 15 (MWRTNQVSSRQNMAG) is leader sequence. At Phe-16 the chain carries N-methylphenylalanine. Residues 16–36 (FTLIEVLVAIAIFASLSVGAY) form a helical membrane-spanning segment.

It belongs to the GSP J family. As to quaternary structure, type II secretion is composed of four main components: the outer membrane complex, the inner membrane complex, the cytoplasmic secretion ATPase and the periplasm-spanning pseudopilus. Interacts with core component epsG. In terms of processing, cleaved by prepilin peptidase. Post-translationally, methylated by prepilin peptidase at the amino group of the N-terminal phenylalanine once the leader sequence is cleaved by prepilin peptidase.

It localises to the cell inner membrane. Component of the type II secretion system required for the energy-dependent secretion of extracellular factors such as proteases and toxins from the periplasm. Part of the pseudopilus tip complex that is critical for the recognition and binding of secretion substrates. The chain is Type II secretion system protein J (epsJ) from Vibrio cholerae serotype O1 (strain ATCC 39315 / El Tor Inaba N16961).